The following is a 307-amino-acid chain: MFSFNMFDHPIPRVFQNRFSTQYRCFSVSMLAGPNDRSDVEKGGKIIMPPSALDQLSRLNITYPMLFKLTNKNSDRMTHCGVLEFVADEGICYLPHWMMQNLLLEEGGLVQVESVNLQVATYSKFQPQSPDFLDITNPKAVLENALRNFACLTTGDVIAINYNEKIYELRVMETKPDKAVSIIECDMNVDFDAPLGYKEPERPVQHEESIEGEADHSGYAGEVGFRAFSGSGNRLDGKKKGVEPSPSPIKPGDIKRGIPNYEFKLGKITFIRNSRPMVKKVEEDEAGGRFVAFSGEGQSLRKKGRKP.

Met-1 is modified (N-acetylmethionine). Residues Ser-129, Ser-231, Ser-245, Ser-247, and Ser-299 each carry the phosphoserine modification. Disordered stretches follow at residues 230–255 and 282–307; these read GSGN…GDIK and EEDE…GRKP.

This sequence belongs to the UFD1 family. In terms of assembly, interacts with USP13. Heterodimer with NPLOC4, this heterodimer binds VCP and inhibits Golgi membrane fusion. Interacts with ZFAND2B; probably through VCP.

It localises to the nucleus. The protein localises to the cytoplasm. Its subcellular location is the cytosol. Its pathway is protein degradation; proteasomal ubiquitin-dependent pathway. Functionally, essential component of the ubiquitin-dependent proteolytic pathway which degrades ubiquitin fusion proteins. The ternary complex containing UFD1, VCP and NPLOC4 binds ubiquitinated proteins and is necessary for the export of misfolded proteins from the ER to the cytoplasm, where they are degraded by the proteasome. The NPLOC4-UFD1-VCP complex regulates spindle disassembly at the end of mitosis and is necessary for the formation of a closed nuclear envelope. It may be involved in the development of some ectoderm-derived structures. Acts as a negative regulator of type I interferon production via the complex formed with VCP and NPLOC4, which binds to RIGI and recruits RNF125 to promote ubiquitination and degradation of RIGI. This is Ubiquitin recognition factor in ER-associated degradation protein 1 from Rattus norvegicus (Rat).